A 167-amino-acid polypeptide reads, in one-letter code: Minor fimbrial protein PrsF (167 aa).

The N-terminal stretch at Met-1–Leu-18 is a signal peptide.

It localises to the secreted. The protein resides in the fimbrium. In terms of biological role, fimbriae (also called pili), polar filaments radiating from the surface of the bacterium to a length of 0.5-1.5 micrometers and numbering 100-300 per cell, enable bacteria to colonize the epithelium of specific host organs. The sequence is that of Minor fimbrial protein PrsF (prsF) from Escherichia coli.